Reading from the N-terminus, the 285-residue chain is Transmembrane protein DDB_G0269096 (285 aa).

Disordered regions lie at residues 1 to 25 (MEDR…MSQS) and 59 to 87 (SFEN…NNKN). Low complexity-rich tracts occupy residues 12 to 25 (SDIS…MSQS) and 65 to 85 (NNNN…NNNN). 5 helical membrane passes run 124–144 (LEEI…LALI), 152–172 (AQMQ…FGVP), 182–202 (LIMG…ALVY), 205–225 (ANFE…MQFT), and 250–270 (FYFI…TALV).

It is found in the membrane. The polypeptide is Transmembrane protein DDB_G0269096 (Dictyostelium discoideum (Social amoeba)).